A 453-amino-acid chain; its full sequence is Bifunctional protein GlmU (453 aa).

Residues 1 to 227 (MNKLSVVILA…LMEVEGVNNR (227 aa)) form a pyrophosphorylase region. Residues 9 to 12 (LAAG), Lys23, Gln74, 79 to 80 (GT), 101 to 103 (YGD), Gly138, Glu152, Asn167, and Asn225 contribute to the UDP-N-acetyl-alpha-D-glucosamine site. Mg(2+) is bound at residue Asp103. Asn225 provides a ligand contact to Mg(2+). Positions 228 to 248 (LQLANLERHYQRKQVEKLLLA) are linker. Positions 249 to 453 (GVTFADPARF…ISNWQRPKRK (205 aa)) are N-acetyltransferase. 2 residues coordinate UDP-N-acetyl-alpha-D-glucosamine: Arg331 and Lys349. The active-site Proton acceptor is the His361. Positions 364 and 375 each coordinate UDP-N-acetyl-alpha-D-glucosamine. Acetyl-CoA-binding positions include Ala378, 384–385 (NY), Ser403, Ala421, and Arg438.

This sequence in the N-terminal section; belongs to the N-acetylglucosamine-1-phosphate uridyltransferase family. In the C-terminal section; belongs to the transferase hexapeptide repeat family. In terms of assembly, homotrimer. It depends on Mg(2+) as a cofactor.

It is found in the cytoplasm. The enzyme catalyses alpha-D-glucosamine 1-phosphate + acetyl-CoA = N-acetyl-alpha-D-glucosamine 1-phosphate + CoA + H(+). It carries out the reaction N-acetyl-alpha-D-glucosamine 1-phosphate + UTP + H(+) = UDP-N-acetyl-alpha-D-glucosamine + diphosphate. Its pathway is nucleotide-sugar biosynthesis; UDP-N-acetyl-alpha-D-glucosamine biosynthesis; N-acetyl-alpha-D-glucosamine 1-phosphate from alpha-D-glucosamine 6-phosphate (route II): step 2/2. The protein operates within nucleotide-sugar biosynthesis; UDP-N-acetyl-alpha-D-glucosamine biosynthesis; UDP-N-acetyl-alpha-D-glucosamine from N-acetyl-alpha-D-glucosamine 1-phosphate: step 1/1. It functions in the pathway bacterial outer membrane biogenesis; LPS lipid A biosynthesis. Its function is as follows. Catalyzes the last two sequential reactions in the de novo biosynthetic pathway for UDP-N-acetylglucosamine (UDP-GlcNAc). The C-terminal domain catalyzes the transfer of acetyl group from acetyl coenzyme A to glucosamine-1-phosphate (GlcN-1-P) to produce N-acetylglucosamine-1-phosphate (GlcNAc-1-P), which is converted into UDP-GlcNAc by the transfer of uridine 5-monophosphate (from uridine 5-triphosphate), a reaction catalyzed by the N-terminal domain. In Histophilus somni (strain 2336) (Haemophilus somnus), this protein is Bifunctional protein GlmU.